The sequence spans 159 residues: Ribosomal RNA large subunit methyltransferase H (159 aa).

Residues Leu-76, Gly-108, and 127–132 (FGLLTL) contribute to the S-adenosyl-L-methionine site.

It belongs to the RNA methyltransferase RlmH family. As to quaternary structure, homodimer.

It localises to the cytoplasm. It catalyses the reaction pseudouridine(1915) in 23S rRNA + S-adenosyl-L-methionine = N(3)-methylpseudouridine(1915) in 23S rRNA + S-adenosyl-L-homocysteine + H(+). In terms of biological role, specifically methylates the pseudouridine at position 1915 (m3Psi1915) in 23S rRNA. The chain is Ribosomal RNA large subunit methyltransferase H from Streptococcus mutans serotype c (strain ATCC 700610 / UA159).